We begin with the raw amino-acid sequence, 133 residues long: Large ribosomal subunit protein bL12 (133 aa).

It belongs to the bacterial ribosomal protein bL12 family. As to quaternary structure, homodimer. Part of the ribosomal stalk of the 50S ribosomal subunit. Forms a multimeric L10(L12)X complex, where L10 forms an elongated spine to which 2 to 4 L12 dimers bind in a sequential fashion. Binds GTP-bound translation factors.

Its function is as follows. Forms part of the ribosomal stalk which helps the ribosome interact with GTP-bound translation factors. Is thus essential for accurate translation. The chain is Large ribosomal subunit protein bL12 from Trichodesmium erythraeum (strain IMS101).